Here is an 856-residue protein sequence, read N- to C-terminus: Envelope glycoprotein gp160 (856 aa).

An N-terminal signal peptide occupies residues 1–32 (MRVKEKYQHLRRWGWRWGTMLLGMLMICSATE). Over 33–684 (KLWVTVYYGV…ITNWLWYIKI (652 aa)) the chain is Extracellular. The cysteines at positions 54 and 74 are disulfide-linked. Asn-88, Asn-136, Asn-141, Asn-156, Asn-160, Asn-186, Asn-197, Asn-230, Asn-234, Asn-241, Asn-262, Asn-276, Asn-289, Asn-295, Asn-301, Asn-332, Asn-339, and Asn-356 each carry an N-linked (GlcNAc...) asparagine; by host glycan. Cystine bridges form between Cys-119/Cys-205, Cys-126/Cys-196, Cys-131/Cys-157, Cys-218/Cys-247, and Cys-228/Cys-239. Positions 131–156 (CTDLKNDTNTNSSSGGMIMEKGEIKN) are V1. A V2 region spans residues 157–196 (CSFNISTSIRGKVQKEYAFFYKHDIIPIDNDTTSYTLTSC). The interval 296–330 (CTRPNNNTRKRIRIQRGPGRTFVTIGKIGNMRQAH) is V3. A disulfide bridge connects residues Cys-296 and Cys-331. The interval 364 to 374 (SSGGDLEIVTH) is CD4-binding loop. Intrachain disulfides connect Cys-378-Cys-445 and Cys-385-Cys-418. The tract at residues 385 to 418 (CNSTQLFNSTWFNSTWSTEGSNNTEGSDTITLPC) is V4. 6 N-linked (GlcNAc...) asparagine; by host glycosylation sites follow: Asn-386, Asn-392, Asn-397, Asn-406, Asn-448, and Asn-463. V5 stretches follow at residues 461 to 471 (NNNGSEIFRPG) and 463 to 471 (NGSEIFRPG). The segment at 512–532 (AVGIGALFLGFLGAAGSTMGA) is fusion peptide. The interval 574–592 (KQLQARILAVERYLKDQQL) is immunosuppression. An intrachain disulfide couples Cys-598 to Cys-604. Residues Asn-611, Asn-616, Asn-624, Asn-637, and Asn-674 are each glycosylated (N-linked (GlcNAc...) asparagine; by host). A coiled-coil region spans residues 633 to 667 (REINNYTSLIHSLIEESQNQQEKNEQELLELDKWA). The tract at residues 662 to 683 (ELDKWASLWNWFNITNWLWYIK) is MPER; binding to GalCer. The chain crosses the membrane as a helical span at residues 685-705 (FIMIVGGLVGLRIVFAVLSIV). Residues 706–856 (NRVRQGHSPL…IRQGLERILL (151 aa)) are Cytoplasmic-facing. The disordered stretch occupies residues 715–742 (LSFQTHLPTPGGPDRPEGIEEEGGERDR). S-palmitoyl cysteine; by host attachment occurs at residues Cys-764 and Cys-837. The short motif at 855 to 856 (LL) is the Di-leucine internalization motif element.

This sequence belongs to the HIV-1 env protein family. The mature envelope protein (Env) consists of a homotrimer of non-covalently associated gp120-gp41 heterodimers. The resulting complex protrudes from the virus surface as a spike. There seems to be as few as 10 spikes on the average virion. Interacts with host CD4, CCR5 and CXCR4. Gp120 also interacts with the C-type lectins CD209/DC-SIGN and CLEC4M/DC-SIGNR (collectively referred to as DC-SIGN(R)). Gp120 and gp41 interact with GalCer. Gp120 interacts with host ITGA4/ITGB7 complex; on CD4+ T-cells, this interaction results in rapid activation of integrin ITGAL/LFA-1, which facilitates efficient cell-to-cell spreading of HIV-1. Gp120 interacts with cell-associated heparan sulfate; this interaction increases virus infectivity on permissive cells and may be involved in infection of CD4- cells. In terms of assembly, the mature envelope protein (Env) consists of a homotrimer of non-covalently associated gp120-gp41 heterodimers. The resulting complex protrudes from the virus surface as a spike. There seems to be as few as 10 spikes on the average virion. Post-translationally, highly glycosylated by host. The high number of glycan on the protein is reffered to as 'glycan shield' because it contributes to hide protein sequence from adaptive immune system. In terms of processing, palmitoylation of the transmembrane protein and of Env polyprotein (prior to its proteolytic cleavage) is essential for their association with host cell membrane lipid rafts. Palmitoylation is therefore required for envelope trafficking to classical lipid rafts, but not for viral replication. Specific enzymatic cleavages in vivo yield mature proteins. Envelope glycoproteins are synthesized as an inactive precursor that is heavily N-glycosylated and processed likely by host cell furin in the Golgi to yield the mature SU and TM proteins. The cleavage site between SU and TM requires the minimal sequence [KR]-X-[KR]-R. About 2 of the 9 disulfide bonds of gp41 are reduced by P4HB/PDI, following binding to CD4 receptor.

Its subcellular location is the virion membrane. It is found in the host cell membrane. The protein resides in the host endosome membrane. In terms of biological role, oligomerizes in the host endoplasmic reticulum into predominantly trimers. In a second time, gp160 transits in the host Golgi, where glycosylation is completed. The precursor is then proteolytically cleaved in the trans-Golgi and thereby activated by cellular furin or furin-like proteases to produce gp120 and gp41. Attaches the virus to the host lymphoid cell by binding to the primary receptor CD4. This interaction induces a structural rearrangement creating a high affinity binding site for a chemokine coreceptor like CXCR4 and/or CCR5. Acts as a ligand for CD209/DC-SIGN and CLEC4M/DC-SIGNR, which are respectively found on dendritic cells (DCs), and on endothelial cells of liver sinusoids and lymph node sinuses. These interactions allow capture of viral particles at mucosal surfaces by these cells and subsequent transmission to permissive cells. HIV subverts the migration properties of dendritic cells to gain access to CD4+ T-cells in lymph nodes. Virus transmission to permissive T-cells occurs either in trans (without DCs infection, through viral capture and transmission), or in cis (following DCs productive infection, through the usual CD4-gp120 interaction), thereby inducing a robust infection. In trans infection, bound virions remain infectious over days and it is proposed that they are not degraded, but protected in non-lysosomal acidic organelles within the DCs close to the cell membrane thus contributing to the viral infectious potential during DCs' migration from the periphery to the lymphoid tissues. On arrival at lymphoid tissues, intact virions recycle back to DCs' cell surface allowing virus transmission to CD4+ T-cells. Functionally, acts as a class I viral fusion protein. Under the current model, the protein has at least 3 conformational states: pre-fusion native state, pre-hairpin intermediate state, and post-fusion hairpin state. During fusion of viral and target intracellular membranes, the coiled coil regions (heptad repeats) assume a trimer-of-hairpins structure, positioning the fusion peptide in close proximity to the C-terminal region of the ectodomain. The formation of this structure appears to drive apposition and subsequent fusion of viral and target cell membranes. Complete fusion occurs in host cell endosomes and is dynamin-dependent, however some lipid transfer might occur at the plasma membrane. The virus undergoes clathrin-dependent internalization long before endosomal fusion, thus minimizing the surface exposure of conserved viral epitopes during fusion and reducing the efficacy of inhibitors targeting these epitopes. Membranes fusion leads to delivery of the nucleocapsid into the cytoplasm. The chain is Envelope glycoprotein gp160 from Homo sapiens (Human).